Consider the following 477-residue polypeptide: Stromelysin-3 (477 aa).

Residues 1–17 form the signal peptide; the sequence is MHLLILLPALCVLGAHS. A propeptide spans 18–85 (activation peptide); that stretch reads APLSYTYLQH…SSSGRNRQKR (68 aa). The interval 64–83 is disordered; that stretch reads RCGVPDIPAPPDSSSGRNRQ. The Zn(2+) site is built by C65, H152, and D154. 4 residues coordinate Ca(2+): D159, G160, G162, and I164. Zn(2+) is bound by residues H167, H180, and H203. Residue E204 is part of the active site. Residues H207 and H213 each coordinate Zn(2+). C279 and C466 are disulfide-bonded. Hemopexin repeat units follow at residues 280–324, 325–369, 370–418, and 419–466; these read KTNF…WRGI, PDTV…GISV, TQIQ…WRGV, and PKGI…FFNC.

This sequence belongs to the peptidase M10A family. It depends on Ca(2+) as a cofactor. Zn(2+) serves as cofactor. As to expression, expressed in fibroblast cells that are activated by thyroid hormone. High levels in resorbing tail.

Its subcellular location is the secreted. The protein localises to the extracellular space. The protein resides in the extracellular matrix. Its function is as follows. May be involved in the modification of the extracellular matrix during metamorphic apoptosis. This Xenopus laevis (African clawed frog) protein is Stromelysin-3 (mmp11).